The primary structure comprises 516 residues: Cytochrome P450 1A2 (516 aa).

O-linked (GlcNAc) serine glycosylation is present at Ser69. Phe226 is a substrate binding site. Cys458 lines the heme pocket.

This sequence belongs to the cytochrome P450 family. As to quaternary structure, interacts with PGRMC1; the interaction requires PGRMC1 homodimerization. Heme serves as cofactor. As to expression, liver.

It is found in the endoplasmic reticulum membrane. The protein resides in the microsome membrane. It carries out the reaction an organic molecule + reduced [NADPH--hemoprotein reductase] + O2 = an alcohol + oxidized [NADPH--hemoprotein reductase] + H2O + H(+). It catalyses the reaction 17beta-estradiol + reduced [NADPH--hemoprotein reductase] + O2 = 2-hydroxy-17beta-estradiol + oxidized [NADPH--hemoprotein reductase] + H2O + H(+). The catalysed reaction is 17beta-estradiol + reduced [NADPH--hemoprotein reductase] + O2 = 4-hydroxy-17beta-estradiol + oxidized [NADPH--hemoprotein reductase] + H2O + H(+). The enzyme catalyses estrone + reduced [NADPH--hemoprotein reductase] + O2 = 2-hydroxyestrone + oxidized [NADPH--hemoprotein reductase] + H2O + H(+). It carries out the reaction estrone + reduced [NADPH--hemoprotein reductase] + O2 = 4-hydroxyestrone + oxidized [NADPH--hemoprotein reductase] + H2O + H(+). It catalyses the reaction cholesterol + reduced [NADPH--hemoprotein reductase] + O2 = 25-hydroxycholesterol + oxidized [NADPH--hemoprotein reductase] + H2O + H(+). The catalysed reaction is all-trans-retinol + reduced [NADPH--hemoprotein reductase] + O2 = all-trans-retinal + oxidized [NADPH--hemoprotein reductase] + 2 H2O + H(+). The enzyme catalyses all-trans-retinal + reduced [NADPH--hemoprotein reductase] + O2 = all-trans-retinoate + oxidized [NADPH--hemoprotein reductase] + H2O + 2 H(+). It carries out the reaction (5Z,8Z,11Z,14Z)-eicosatetraenoate + reduced [NADPH--hemoprotein reductase] + O2 = (14R,15S)-epoxy-(5Z,8Z,11Z)-eicosatrienoate + oxidized [NADPH--hemoprotein reductase] + H2O + H(+). It catalyses the reaction (5Z,8Z,11Z,14Z)-eicosatetraenoate + reduced [NADPH--hemoprotein reductase] + O2 = (14S,15R)-epoxy-(5Z,8Z,11Z)-eicosatrienoate + oxidized [NADPH--hemoprotein reductase] + H2O + H(+). The catalysed reaction is (5Z,8Z,11Z,14Z,17Z)-eicosapentaenoate + reduced [NADPH--hemoprotein reductase] + O2 = (17R,18S)-epoxy-(5Z,8Z,11Z,14Z)-eicosatetraenoate + oxidized [NADPH--hemoprotein reductase] + H2O + H(+). The enzyme catalyses (4Z,7Z,10Z,13Z,16Z,19Z)-docosahexaenoate + reduced [NADPH--hemoprotein reductase] + O2 = (19R,20S)-epoxy-(4Z,7Z,10Z,13Z,16Z)-docosapentaenoate + oxidized [NADPH--hemoprotein reductase] + H2O + H(+). It carries out the reaction (5S)-hydroperoxy-(6E,8Z,11Z,14Z)-eicosatetraenoate = 5-oxo-(6E,8Z,11Z,14Z)-eicosatetraenoate + H2O. It catalyses the reaction (12S)-hydroperoxy-(5Z,8Z,10E,14Z)-eicosatetraenoate = 12-oxo-(5Z,8Z,10E,14Z)-eicosatetraenoate + H2O. The catalysed reaction is (15S)-hydroperoxy-(5Z,8Z,11Z,13E)-eicosatetraenoate = 15-oxo-(5Z,8Z,11Z,13E)-eicosatetraenoate + H2O. The enzyme catalyses (13S)-hydroperoxy-(9Z,11E)-octadecadienoate = 13-oxo-(9Z,11E)-octadecadienoate + H2O. It carries out the reaction (5Z,8Z,11Z,14Z)-eicosatetraenoate + reduced [NADPH--hemoprotein reductase] + O2 = 13-hydroxy-(5Z,8Z,11Z,14Z)-eicosatetraenoate + oxidized [NADPH--hemoprotein reductase] + H2O + H(+). It catalyses the reaction (5Z,8Z,11Z,14Z)-eicosatetraenoate + reduced [NADPH--hemoprotein reductase] + O2 = 19-hydroxy-(5Z,8Z,11Z,14Z)-eicosatetraenoate + oxidized [NADPH--hemoprotein reductase] + H2O + H(+). The catalysed reaction is (9Z,12Z)-octadecadienoate + reduced [NADPH--hemoprotein reductase] + O2 = 11-hydroxy-(9Z,12Z)-octadecadienoate + oxidized [NADPH--hemoprotein reductase] + H2O + H(+). The protein operates within cofactor metabolism; retinol metabolism. Its pathway is steroid metabolism; cholesterol metabolism. It functions in the pathway lipid metabolism; arachidonate metabolism. Functionally, a cytochrome P450 monooxygenase involved in the metabolism of various endogenous substrates, including fatty acids, steroid hormones and vitamins. Mechanistically, uses molecular oxygen inserting one oxygen atom into a substrate, and reducing the second into a water molecule, with two electrons provided by NADPH via cytochrome P450 reductase (NADPH--hemoprotein reductase). Catalyzes the hydroxylation of carbon-hydrogen bonds. Exhibits high catalytic activity for the formation of hydroxyestrogens from estrone (E1) and 17beta-estradiol (E2), namely 2-hydroxy E1 and E2. Metabolizes cholesterol toward 25-hydroxycholesterol, a physiological regulator of cellular cholesterol homeostasis. May act as a major enzyme for all-trans retinoic acid biosynthesis in the liver. Catalyzes two successive oxidative transformation of all-trans retinol to all-trans retinal and then to the active form all-trans retinoic acid. Primarily catalyzes stereoselective epoxidation of the last double bond of polyunsaturated fatty acids (PUFA), displaying a strong preference for the (R,S) stereoisomer. Catalyzes bisallylic hydroxylation and omega-1 hydroxylation of PUFA. May also participate in eicosanoids metabolism by converting hydroperoxide species into oxo metabolites (lipoxygenase-like reaction, NADPH-independent). Plays a role in the oxidative metabolism of xenobiotics. Catalyzes the N-hydroxylation of heterocyclic amines and the O-deethylation of phenacetin. Metabolizes caffeine via N3-demethylation. This chain is Cytochrome P450 1A2, found in Homo sapiens (Human).